We begin with the raw amino-acid sequence, 248 residues long: MYKLVLIRHGESTWNLENRFTGWVDVDLTDTGAAQARLAGKLLKEAGFAFDVAYTSVLKRAIRTLWHVQDEMDEMWIPVRNEWRLNERHYGALAGLNKAETAAKFGDEQVLVWRRSYDTPPPALEPTDPRASYDDPRYANVPREQIPLTECLKDTVARVLPLWNESIAPDIQSGKRVVIAAHGNSIRALVKYLDQISDDDIVGLNIPNGTPLVYELDASLRPLRHYYLGDQEAIAASLAAVASQGKAR.

Substrate is bound by residues 8–15, 21–22, R60, 87–90, K98, 114–115, and 183–184; these read RHGESTWN, TG, ERHY, RR, and GN. Catalysis depends on H9, which acts as the Tele-phosphohistidine intermediate. E87 acts as the Proton donor/acceptor in catalysis.

It belongs to the phosphoglycerate mutase family. BPG-dependent PGAM subfamily. As to quaternary structure, homodimer.

The enzyme catalyses (2R)-2-phosphoglycerate = (2R)-3-phosphoglycerate. It participates in carbohydrate degradation; glycolysis; pyruvate from D-glyceraldehyde 3-phosphate: step 3/5. Functionally, catalyzes the interconversion of 2-phosphoglycerate and 3-phosphoglycerate. The polypeptide is 2,3-bisphosphoglycerate-dependent phosphoglycerate mutase (Cupriavidus pinatubonensis (strain JMP 134 / LMG 1197) (Cupriavidus necator (strain JMP 134))).